The following is a 149-amino-acid chain: Decarboxylase AgnL1 (149 aa).

In terms of domain architecture, EthD spans 30 to 125 (PGMSEEDYRH…VGDHEKFADT (96 aa)).

The protein belongs to the tpcK family.

The catalysed reaction is atrochrysone carboxylate + H(+) = atrochrysone + CO2. Its pathway is secondary metabolite biosynthesis. Functionally, decarboxylase; part of the gene cluster that mediates the biosynthesis of agnestins, dihydroxy-xanthone metabolites. The pathway begins with the assembly and cyclization of atrochrysone thioester by the non-reducing polyketide synthase Agnpks1. The atrochrysone carboxyl ACP thioesterase AgnL7 then breaks the thioester bond and releases the atrochrysone carboxylic acid as the first enzyme-free intermediate. The decarboxylase AgnL1 then catalyzes the concerted decarboxylation-elimination required to convert atochrysone carboxylic acid into emodin anthrone, which is further oxidized to emodin by the anthrone oxygenase AgnL2. Emodin then undergoes reduction catalyzed by the oxidoreductase AgnL4 to yield the dihydroquinone tautomer which is the substrate for reduction by the short chain dehydrogenase AgnL6 reduction to produce hydroxyketone, followed by AgnL8 dehydration and likely spontaneous autoxidation to chrysophanol. Baeyer-Villiger oxidation by the oxidase AgnL3 leads to monodictyphenone via cleavage of the C-10/C-10a bond of chrysophanol. Alternative cleavage at the C-4a/C-10 bond of chrysophanol also leads to the formation some cephalone F. Further conversion to agnestins A and B, requires reduction to dihydro-monodictyphenone, oxidation to agnestin C probably via an epoxide, and rearrangement to either agnestin A or agnestin B directly, although agnestin A or agnestin B can also interconvert. Within the cluster, AgnR1 is the only unassigned oxidoreductase present which could be involved in this conversion. However, AgnR1 seems not to be involved in this step, and thus genes involved in the proposed oxidation/reduction may be located elsewhere on the genome. Further agnestin A derivatives are probably formed by spontaneous decarboxylations, dehydrations and methanolysis reactions. This is Decarboxylase AgnL1 from Paecilomyces divaricatus (Penicillium divaricatum).